Consider the following 630-residue polypeptide: Plastin-3 (630 aa).

2 consecutive EF-hand domains span residues 12–47 (DELDELKEAFAKVDLNSNGFICDYELHELFKEANMP) and 52–87 (KVREIIQKLMLDGDRNKDGKISFDEFVYIFQEVKSS). Residues aspartate 25, asparagine 27, asparagine 29, glutamate 36, aspartate 65, asparagine 67, aspartate 69, lysine 71, and glutamate 76 each contribute to the Ca(2+) site. 2 actin-binding regions span residues 109–382 (TSEL…ALTK) and 383–627 (PENQ…GRGM). 2 Calponin-homology (CH) domains span residues 123–239 (EEEK…KIGL) and 267–378 (LSPE…NKYP). 4 positions are modified to phosphoserine: serine 268, serine 293, serine 326, and serine 339. Residue threonine 391 is modified to Phosphothreonine. 2 consecutive Calponin-homology (CH) domains span residues 397 to 506 (TREE…RRYT) and 518 to 627 (KAND…GRGM).

Monomer.

It is found in the cytoplasm. In terms of biological role, actin-bundling protein. In Bos taurus (Bovine), this protein is Plastin-3 (PLS3).